Consider the following 62-residue polypeptide: Temporin-La (62 aa).

Residues 1 to 22 form the signal peptide; sequence MFPLKKSLLLLFFLGTINLSFC. Positions 23-47 are excised as a propeptide; that stretch reads EEERDVDQDERRDDPGERNVQVEKR. Residue Leu60 is modified to Leucine amide.

It belongs to the frog skin active peptide (FSAP) family. Temporin subfamily. As to expression, expressed by the skin glands.

The protein resides in the secreted. The protein localises to the target cell membrane. Functionally, antimicrobial peptide with amphipathic alpha-helical structure that acts against both Gram-positive and Gram-negative bacteria and the fungus Candida albicans. Is active against S.aureus ATCC 25923 (MIC=2.5 ug/ml), S.suis 2 CVCC 606 (MIC=15.6 ug/ml), Salmonella ATCC 20020 (MIC=15.6 ug/ml), P.aeruginosa ATCC 227853 (MIC=60 ug/ml), and C.albicans ATCC10231 (MIC=31.25 ug/ml). Is not active against B.subtilis ADB403, E.coli ATCC 25922, and K.pneumoniae ATCC 700603. Also shows a strong antitumor activity, but no hemolytic activity. The sequence is that of Temporin-La from Aquarana catesbeiana (American bullfrog).